We begin with the raw amino-acid sequence, 101 residues long: NAD(P)H-quinone oxidoreductase subunit 4L, chloroplastic (101 aa).

Transmembrane regions (helical) follow at residues 2-22 (MLEH…YGLI), 32-52 (MCLE…SDFF), and 61-81 (ILSI…LAIV).

It belongs to the complex I subunit 4L family. NDH is composed of at least 16 different subunits, 5 of which are encoded in the nucleus.

It localises to the plastid. Its subcellular location is the chloroplast thylakoid membrane. It carries out the reaction a plastoquinone + NADH + (n+1) H(+)(in) = a plastoquinol + NAD(+) + n H(+)(out). It catalyses the reaction a plastoquinone + NADPH + (n+1) H(+)(in) = a plastoquinol + NADP(+) + n H(+)(out). Functionally, NDH shuttles electrons from NAD(P)H:plastoquinone, via FMN and iron-sulfur (Fe-S) centers, to quinones in the photosynthetic chain and possibly in a chloroplast respiratory chain. The immediate electron acceptor for the enzyme in this species is believed to be plastoquinone. Couples the redox reaction to proton translocation, and thus conserves the redox energy in a proton gradient. This Buxus microphylla (Littleleaf boxwood) protein is NAD(P)H-quinone oxidoreductase subunit 4L, chloroplastic.